Reading from the N-terminus, the 122-residue chain is Large ribosomal subunit protein uL18 (122 aa).

Belongs to the universal ribosomal protein uL18 family. As to quaternary structure, part of the 50S ribosomal subunit; part of the 5S rRNA/L5/L18/L25 subcomplex. Contacts the 5S and 23S rRNAs.

In terms of biological role, this is one of the proteins that bind and probably mediate the attachment of the 5S RNA into the large ribosomal subunit, where it forms part of the central protuberance. The protein is Large ribosomal subunit protein uL18 of Desulfitobacterium hafniense (strain DSM 10664 / DCB-2).